Consider the following 451-residue polypeptide: CBL-interacting protein kinase 10 (451 aa).

One can recognise a Protein kinase domain in the interval tyrosine 13 to phenylalanine 267. ATP-binding positions include leucine 19–valine 27 and lysine 42. Catalysis depends on aspartate 135, which acts as the Proton acceptor. Residues aspartate 153–glutamate 182 are activation loop. Residues isoleucine 304–glutamate 336 enclose the NAF domain. A PPI region spans residues lysine 341 to phenylalanine 370.

It belongs to the protein kinase superfamily. CAMK Ser/Thr protein kinase family. SNF1 subfamily. Mn(2+) serves as cofactor.

It catalyses the reaction L-seryl-[protein] + ATP = O-phospho-L-seryl-[protein] + ADP + H(+). The enzyme catalyses L-threonyl-[protein] + ATP = O-phospho-L-threonyl-[protein] + ADP + H(+). Its function is as follows. CIPK serine-threonine protein kinases interact with CBL proteins. Binding of a CBL protein to the regulatory NAF domain of CIPK protein lead to the activation of the kinase in a calcium-dependent manner. The chain is CBL-interacting protein kinase 10 (CIPK10) from Oryza sativa subsp. japonica (Rice).